Here is a 234-residue protein sequence, read N- to C-terminus: Large ribosomal subunit protein uL1 (234 aa).

Belongs to the universal ribosomal protein uL1 family. Part of the 50S ribosomal subunit.

Its function is as follows. Binds directly to 23S rRNA. The L1 stalk is quite mobile in the ribosome, and is involved in E site tRNA release. Protein L1 is also a translational repressor protein, it controls the translation of the L11 operon by binding to its mRNA. The sequence is that of Large ribosomal subunit protein uL1 from Desulfatibacillum aliphaticivorans.